A 147-amino-acid chain; its full sequence is DNA polymerase epsilon subunit 3 (147 aa).

Alanine 2 carries the post-translational modification N-acetylalanine. The residue at position 83 (threonine 83) is a Phosphothreonine. Residues 85-146 are a coiled coil; the sequence is LKEALEAYRR…EEQNEEEEVD (62 aa). A compositionally biased stretch (basic and acidic residues) spans 93–124; sequence RREQKGKKEASEQKKKDKDKKTDSEEQDKSRD. The tract at residues 93–147 is disordered; the sequence is RREQKGKKEASEQKKKDKDKKTDSEEQDKSRDEDNDEDEERLEEEEQNEEEEVDN. Serine 122 bears the Phosphoserine mark. The span at 125–147 shows a compositional bias: acidic residues; sequence EDNDEDEERLEEEEQNEEEEVDN.

As to quaternary structure, component of the DNA polymerase epsilon complex consisting of four subunits: the catalytic subunit POLE and the accessory subunits POLE2, POLE3 and POLE4. Interaction with POLE4 is a prerequisite for further binding with POLE and POLE2. Heterodimer with CHRAC1; binds to DNA. Component of the CHRAC ISWI chromatin remodeling complex at least composed of SMARCA5/SNF2H, BAZ1A/ACF1, CHRAC1 and POLE3; the complex preferentially binds DNA through the CHRAC1-POLE3 heterodimer and possesses ATP-dependent nucleosome-remodeling activity. Within the complex, the heterodimer with CHRAC1 interacts with SMARCA5/SNF2H; the interaction is direct and enhances nucleosome sliding activity by the SMARCA5/SNF2H and BAZ1A/ACF1 interaction. Within the complex, the heterodimer with CHRAC1 interacts with BAZ1A/ACF1; the interactions are direct.

The protein resides in the nucleus. Accessory component of the DNA polymerase epsilon complex. Participates in DNA repair and in chromosomal DNA replication. Forms a complex with CHRAC1 and binds naked DNA, which is then incorporated into chromatin, aided by the nucleosome-remodeling activity of ISWI/SNF2H and ACF1. Does not enhance nucleosome sliding activity of the ACF-5 ISWI chromatin remodeling complex. In Bos taurus (Bovine), this protein is DNA polymerase epsilon subunit 3 (POLE3).